The chain runs to 477 residues: Alanine--glyoxylate aminotransferase 2 homolog 2, mitochondrial (477 aa).

A mitochondrion-targeting transit peptide spans 1–22; sequence MQRFAAKRSVQNISVSLWRRCI. Residues 165–166, tyrosine 192, and 292–295 each bind pyridoxal 5'-phosphate; these read GT and DEVQ. At lysine 321 the chain carries N6-(pyridoxal phosphate)lysine. A pyridoxal 5'-phosphate-binding site is contributed by threonine 350.

It belongs to the class-III pyridoxal-phosphate-dependent aminotransferase family. Homotetramer. Interacts with GRF3. The cofactor is pyridoxal 5'-phosphate.

It localises to the mitochondrion. The catalysed reaction is glyoxylate + L-alanine = glycine + pyruvate. The polypeptide is Alanine--glyoxylate aminotransferase 2 homolog 2, mitochondrial (AGT3) (Arabidopsis thaliana (Mouse-ear cress)).